A 138-amino-acid polypeptide reads, in one-letter code: Small ribosomal subunit protein uS11c (138 aa).

The disordered stretch occupies residues 1 to 23; it reads MAKPILRIGSRKNTRSGSRKNVR. Over residues 9-23 the composition is skewed to basic residues; sequence GSRKNTRSGSRKNVR.

The protein belongs to the universal ribosomal protein uS11 family. Part of the 30S ribosomal subunit.

It is found in the plastid. The protein resides in the chloroplast. This Barbarea verna (Land cress) protein is Small ribosomal subunit protein uS11c.